Consider the following 138-residue polypeptide: Phospholipase A2 group V (138 aa).

An N-terminal signal peptide occupies residues M1–G20. 6 disulfides stabilise this stretch: C46–C137, C48–C64, C63–C117, C70–C110, C79–C103, and C97–C108. Ca(2+)-binding residues include Y47, G49, and G51. H67 is an active-site residue. D68 provides a ligand contact to Ca(2+). The active site involves D111.

The protein belongs to the phospholipase A2 family. The cofactor is Ca(2+). Post-translationally, this enzyme lacks one of the seven disulfide bonds found in similar PLA2 proteins. Heart, placenta and less abundantly, in lung. Detected in the outer and inner plexiform layers of the retina (at protein level). Expressed in monocytes and macrophages.

It localises to the secreted. Its subcellular location is the cell membrane. The protein resides in the cytoplasmic vesicle. It is found in the phagosome. The protein localises to the recycling endosome. It localises to the golgi apparatus. Its subcellular location is the cis-Golgi network. The protein resides in the trans-Golgi network. It carries out the reaction a 1,2-diacyl-sn-glycero-3-phosphocholine + H2O = a 1-acyl-sn-glycero-3-phosphocholine + a fatty acid + H(+). The enzyme catalyses 1-hexadecanoyl-2-(9Z-octadecenoyl)-sn-glycero-3-phosphocholine + H2O = 1-hexadecanoyl-sn-glycero-3-phosphocholine + (9Z)-octadecenoate + H(+). The catalysed reaction is 1-hexadecanoyl-2-(5Z,8Z,11Z,14Z-eicosatetraenoyl)-sn-glycero-3-phosphocholine + H2O = 1-hexadecanoyl-sn-glycero-3-phosphocholine + (5Z,8Z,11Z,14Z)-eicosatetraenoate + H(+). It catalyses the reaction 1-hexadecanoyl-2-(9Z,12Z-octadecadienoyl)-sn-glycero-3-phosphoethanolamine + H2O = 1-hexadecanoyl-sn-glycero-3-phosphoethanolamine + (9Z,12Z)-octadecadienoate + H(+). It carries out the reaction 1-hexadecanoyl-2-(5Z,8Z,11Z,14Z-eicosatetraenoyl)-sn-glycero-3-phosphoethanolamine + H2O = 1-hexadecanoyl-sn-glycero-3-phosphoethanolamine + (5Z,8Z,11Z,14Z)-eicosatetraenoate + H(+). The enzyme catalyses 1-octadecanoyl-2-(5Z,8Z,11Z,14Z-eicosatetraenoyl)-sn-glycero-3-phospho-(1D-myo-inositol) + H2O = 1-octadecanoyl-sn-glycero-3-phospho-(1D-myo-inositol) + (5Z,8Z,11Z,14Z)-eicosatetraenoate + H(+). The catalysed reaction is 1-hexadecanoyl-2-(9Z-octadecenoyl)-sn-glycero-3-phosphoglycerol + H2O = 1-hexadecanoyl-sn-glycero-3-phosphoglycerol + (9Z)-octadecenoate + H(+). It catalyses the reaction N-hexadecanoyl-1,2-di-(9Z-octadecenoyl)-sn-glycero-3-phosphoethanolamine + H2O = N-hexadecanoyl-1-(9Z-octadecenoyl)-sn-glycero-3-phosphoethanolamine + (9Z)-octadecenoate + H(+). It carries out the reaction 1'-[1,2-di-(9Z-octadecenoyl)-sn-glycero-3-phospho]-3'-[1-(9Z-octadecenoyl)-sn-glycero-3-phospho]-glycerol + H2O = 1',3'-bis-[1-(9Z-octadecenoyl)-sn-glycero-3-phospho]-glycerol + (9Z)-octadecenoate + H(+). The enzyme catalyses 1',3'-bis[1,2-di-(9Z-octadecenoyl)-sn-glycero-3-phospho]-glycerol + H2O = 1'-[1,2-di-(9Z-octadecenoyl)-sn-glycero-3-phospho]-3'-[1-(9Z-octadecenoyl)-sn-glycero-3-phospho]-glycerol + (9Z)-octadecenoate + H(+). Its pathway is lipid metabolism; phospholipid metabolism. The protein operates within lipid metabolism; leukotriene B4 biosynthesis. It functions in the pathway lipid metabolism; leukotriene C4 biosynthesis. With respect to regulation, activated by cardiolipin. Functionally, secretory calcium-dependent phospholipase A2 that primarily targets extracellular phospholipids. Hydrolyzes the ester bond of the fatty acyl group attached at sn-2 position of phospholipids (phospholipase A2 activity), preferentially releasing fatty acyl groups with a low degree of unsaturation such as oleoyl (C18:1) and linoleoyl (C18:2) groups. Hydrolyzes low-density lipoprotein (LDL) phospholipids releasing unsaturated fatty acids that drive macrophage polarization toward an M2 phenotype. May act in an autocrine and paracrine manner. Contributes to lipid remodeling of cellular membranes at different subcellular locations and generation of lipid mediators involved in pathogen clearance. Cleaves sn-2 fatty acyl chains of cardiolipin, a major component of the inner membrane of mitochondria and bacterial membranes. Promotes phagocytosis of bacteria in macrophages through production of lysophosphatidylethanolamines. Displays bactericidal activity against Gram-positive bacteria by directly hydrolyzing phospholipids of the bacterial membrane. Promotes phagocytosis and killing of ingested fungi likely through controlling phagosome-lysosome fusion and phagosome maturation. Plays a role in biosynthesis of cysteinyl leukotrienes (CysLTs) in myeloid cells. In eosinophils, triggers perinuclear arachidonate release and LTC4 synthesis in a PLA2G4A-independent way. In neutrophils, amplifies CysLTs biosynthesis initiated by PLA2G4A. Promotes immune complex clearance in macrophages via stimulating synthesis of CysLTs, which act through CYSLTR1 to trigger phagocytosis. May regulate antigen processing in antigen-presenting cells. In pulmonary macrophages regulates IL33 production required for activation of group 2 innate lymphoid cells. May play a role in the biosynthesis of N-acyl ethanolamines that regulate energy metabolism. Hydrolyzes N-acyl phosphatidylethanolamines to N-acyl lysophosphatidylethanolamines, which are further cleaved by a lysophospholipase D to release N-acyl ethanolamines. This Homo sapiens (Human) protein is Phospholipase A2 group V (PLA2G5).